The following is a 629-amino-acid chain: tRNA uridine 5-carboxymethylaminomethyl modification enzyme MnmG (629 aa).

Glycine 13–glycine 18 contributes to the FAD binding site. Glycine 273–phenylalanine 287 serves as a coordination point for NAD(+).

The protein belongs to the MnmG family. As to quaternary structure, homodimer. Heterotetramer of two MnmE and two MnmG subunits. The cofactor is FAD.

It is found in the cytoplasm. Its function is as follows. NAD-binding protein involved in the addition of a carboxymethylaminomethyl (cmnm) group at the wobble position (U34) of certain tRNAs, forming tRNA-cmnm(5)s(2)U34. The protein is tRNA uridine 5-carboxymethylaminomethyl modification enzyme MnmG of Photorhabdus laumondii subsp. laumondii (strain DSM 15139 / CIP 105565 / TT01) (Photorhabdus luminescens subsp. laumondii).